The primary structure comprises 280 residues: Large ribosomal subunit protein uL2 (280 aa).

The tract at residues G215–K280 is disordered.

This sequence belongs to the universal ribosomal protein uL2 family. As to quaternary structure, part of the 50S ribosomal subunit. Forms a bridge to the 30S subunit in the 70S ribosome.

One of the primary rRNA binding proteins. Required for association of the 30S and 50S subunits to form the 70S ribosome, for tRNA binding and peptide bond formation. It has been suggested to have peptidyltransferase activity; this is somewhat controversial. Makes several contacts with the 16S rRNA in the 70S ribosome. The sequence is that of Large ribosomal subunit protein uL2 from Dictyoglomus thermophilum (strain ATCC 35947 / DSM 3960 / H-6-12).